Reading from the N-terminus, the 444-residue chain is Protein CPn_0808/CP_1063/CPj0808/CpB0837 (444 aa).

Residues 1–13 (MTSGVSGSSSQDP) are compositionally biased toward polar residues. Residues 1–124 (MTSGVSGSSS…NNYDSPSLPT (124 aa)) form a disordered region. Low complexity predominate over residues 15–24 (LAAQLAQSSQ). The span at 25-42 (KAGNAQSGHDTKNVTKQG) shows a compositional bias: polar residues. The span at 77 to 86 (SKGEKSEKSG) shows a compositional bias: basic and acidic residues. The span at 88–103 (SKSSTSVASASETATA) shows a compositional bias: low complexity. The span at 113-124 (RQNNYDSPSLPT) shows a compositional bias: polar residues.

This sequence belongs to the chlamydial CPn_0808/CT_579/TC_0868 family.

This chain is Protein CPn_0808/CP_1063/CPj0808/CpB0837, found in Chlamydia pneumoniae (Chlamydophila pneumoniae).